Consider the following 584-residue polypeptide: Arginine--tRNA ligase (584 aa).

The short motif at 126–136 is the 'HIGH' region element; sequence PNIAKEMHVGH.

Belongs to the class-I aminoacyl-tRNA synthetase family. Monomer.

Its subcellular location is the cytoplasm. The enzyme catalyses tRNA(Arg) + L-arginine + ATP = L-arginyl-tRNA(Arg) + AMP + diphosphate. The polypeptide is Arginine--tRNA ligase (argS) (Synechocystis sp. (strain ATCC 27184 / PCC 6803 / Kazusa)).